Here is a 146-residue protein sequence, read N- to C-terminus: Hemoglobin subunit beta (146 aa).

The residue at position 1 (valine 1) is an N-acetylvaline. Residues 2–146 (HLTGEEKSAV…VANALAHKYH (145 aa)) form the Globin domain. Threonine 12 is subject to Phosphothreonine. Serine 44 carries the post-translational modification Phosphoserine. Lysine 59 carries the N6-acetyllysine modification. Histidine 63 serves as a coordination point for heme b. Lysine 82 is modified (N6-acetyllysine). Histidine 92 contributes to the heme b binding site. Cysteine 93 bears the S-nitrosocysteine mark. Position 144 is an N6-acetyllysine (lysine 144).

The protein belongs to the globin family. As to quaternary structure, heterotetramer of two alpha chains and two beta chains. Red blood cells.

Involved in oxygen transport from the lung to the various peripheral tissues. This chain is Hemoglobin subunit beta (HBB), found in Saguinus mystax (Moustached tamarin).